A 158-amino-acid polypeptide reads, in one-letter code: N-alpha-acetyltransferase RimI (158 aa).

The 148-residue stretch at 8–155 (VTIGALTRAD…DAYTMRRDSG (148 aa)) folds into the N-acetyltransferase domain.

Belongs to the acetyltransferase family. RimI subfamily. As to quaternary structure, monomer. Interacts with TsaD. Interacts with GroS/GroES.

It carries out the reaction N-terminal L-methionyl-L-alanyl-[protein] + acetyl-CoA = N-terminal N(alpha)-acetyl-L-methionyl-L-alanyl-[protein] + CoA + H(+). The enzyme catalyses N-terminal L-methionyl-L-seryl-[protein] + acetyl-CoA = N-terminal N(alpha)-acetyl-L-methionyl-L-seryl-[protein] + CoA + H(+). The catalysed reaction is N-terminal L-methionyl-L-valyl-[protein] + acetyl-CoA = N-terminal N(alpha)-acetyl-L-methionyl-L-valyl-[protein] + CoA + H(+). It catalyses the reaction N-terminal L-methionyl-L-threonyl-[protein] + acetyl-CoA = N-terminal N(alpha)-acetyl-L-methionyl-L-threonyl-[protein] + CoA + H(+). It carries out the reaction N-terminal L-methionyl-L-lysyl-[protein] + acetyl-CoA = N-terminal N(alpha)-acetyl-L-methionyl-L-lysyl-[protein] + CoA + H(+). The enzyme catalyses N-terminal L-methionyl-L-leucyl-[protein] + acetyl-CoA = N-terminal N(alpha)-acetyl-L-methionyl-L-leucyl-[protein] + CoA + H(+). The catalysed reaction is N-terminal L-methionyl-L-phenylalanyl-[protein] + acetyl-CoA = N-terminal N(alpha)-acetyl-L-methionyl-L-phenylalanyl-[protein] + CoA + H(+). It catalyses the reaction N-terminal L-methionyl-L-tyrosyl-[protein] + acetyl-CoA = N-terminal N(alpha)-acetyl-L-methionyl-L-tyrosyl-[protein] + CoA + H(+). It carries out the reaction N-terminal glycyl-[protein] + acetyl-CoA = N-terminal N(alpha)-acetylglycyl-[protein] + CoA + H(+). The enzyme catalyses N-terminal L-alanyl-[protein] + acetyl-CoA = N-terminal N(alpha)-acetyl-L-alanyl-[protein] + CoA + H(+). The catalysed reaction is N-terminal L-seryl-[protein] + acetyl-CoA = N-terminal N(alpha)-acetyl-L-seryl-[protein] + CoA + H(+). It catalyses the reaction N-terminal L-valyl-[protein] + acetyl-CoA = N-terminal N(alpha)-acetyl-L-valyl-[protein] + CoA + H(+). It carries out the reaction N-terminal L-cysteinyl-[protein] + acetyl-CoA = N-terminal N(alpha)-acetyl-L-cysteinyl-[protein] + CoA + H(+). The enzyme catalyses N-terminal L-threonyl-[protein] + acetyl-CoA = N-terminal N(alpha)-acetyl-L-threonyl-[protein] + CoA + H(+). Functionally, N-alpha-acetyltransferase that specifically mediates the acetylation of N-terminal residues. Able to mediate acetylation of a wide variety of N-terminal residues, with preference for hydrophobic N-termini. Acetylates GroS/GroES and GroEL1. Able to acetylate the ribosomal protein bS18, but it is unclear whether it acetylates its N-terminal alanine residue. This is N-alpha-acetyltransferase RimI from Mycobacterium tuberculosis (strain ATCC 25618 / H37Rv).